We begin with the raw amino-acid sequence, 431 residues long: Glycerol-3-phosphate dehydrogenase [NAD(P)+] (431 aa).

The span at 1 to 19 shows a compositional bias: polar residues; sequence MTSANDKSTDTNVDSTQAE. Residues 1 to 25 are disordered; the sequence is MTSANDKSTDTNVDSTQAEQKMAEK. NADPH-binding residues include serine 79, phenylalanine 80, arginine 100, and lysine 173. Sn-glycerol 3-phosphate-binding residues include lysine 173 and glycine 201. An NADPH-binding site is contributed by alanine 205. Sn-glycerol 3-phosphate contacts are provided by lysine 256, aspartate 309, serine 319, arginine 320, and asparagine 321. Lysine 256 functions as the Proton acceptor in the catalytic mechanism. Arginine 320 lines the NADPH pocket. Residue glutamate 346 participates in NADPH binding.

This sequence belongs to the NAD-dependent glycerol-3-phosphate dehydrogenase family.

Its subcellular location is the cytoplasm. The catalysed reaction is sn-glycerol 3-phosphate + NAD(+) = dihydroxyacetone phosphate + NADH + H(+). The enzyme catalyses sn-glycerol 3-phosphate + NADP(+) = dihydroxyacetone phosphate + NADPH + H(+). It functions in the pathway membrane lipid metabolism; glycerophospholipid metabolism. In terms of biological role, catalyzes the reduction of the glycolytic intermediate dihydroxyacetone phosphate (DHAP) to sn-glycerol 3-phosphate (G3P), the key precursor for phospholipid synthesis. The polypeptide is Glycerol-3-phosphate dehydrogenase [NAD(P)+] (Psychrobacter arcticus (strain DSM 17307 / VKM B-2377 / 273-4)).